A 195-amino-acid chain; its full sequence is Probable DNA-directed RNA polymerase subunit delta (195 aa).

An HTH HARE-type domain is found at 14-83; sequence LSMIEVARAI…GDNKWGLRSW (70 aa). 2 stretches are compositionally biased toward acidic residues: residues 120 to 138 and 145 to 195; these read DSDAIDYNADDPEDEDAYE and YDDE…TSEE. A disordered region spans residues 120 to 195; the sequence is DSDAIDYNAD…SDDDAETSEE (76 aa).

It belongs to the RpoE family. In terms of assembly, RNAP is composed of a core of 2 alpha, a beta and a beta' subunits. The core is associated with a delta subunit and one of several sigma factors.

Its function is as follows. Participates in both the initiation and recycling phases of transcription. In the presence of the delta subunit, RNAP displays an increased specificity of transcription, a decreased affinity for nucleic acids, and an increased efficiency of RNA synthesis because of enhanced recycling. This chain is Probable DNA-directed RNA polymerase subunit delta, found in Streptococcus pneumoniae serotype 2 (strain D39 / NCTC 7466).